The sequence spans 200 residues: Small ribosomal subunit protein eS8A (200 aa).

Residues 1 to 31 (MGISRDSRHKRSATGAKRAQFRKKRKFELGR) form a disordered region. A Phosphothreonine modification is found at threonine 62. 4 positions are modified to phosphoserine: serine 66, serine 69, serine 73, and serine 86. Phosphothreonine is present on threonine 107. Residues serine 154, serine 155, serine 158, and serine 161 each carry the phosphoserine modification.

The protein belongs to the eukaryotic ribosomal protein eS8 family. Component of the small ribosomal subunit (SSU). Mature yeast ribosomes consist of a small (40S) and a large (60S) subunit. The 40S small subunit contains 1 molecule of ribosomal RNA (18S rRNA) and 33 different proteins (encoded by 57 genes). The large 60S subunit contains 3 rRNA molecules (25S, 5.8S and 5S rRNA) and 46 different proteins (encoded by 81 genes).

The protein resides in the cytoplasm. In terms of biological role, component of the ribosome, a large ribonucleoprotein complex responsible for the synthesis of proteins in the cell. The small ribosomal subunit (SSU) binds messenger RNAs (mRNAs) and translates the encoded message by selecting cognate aminoacyl-transfer RNA (tRNA) molecules. The large subunit (LSU) contains the ribosomal catalytic site termed the peptidyl transferase center (PTC), which catalyzes the formation of peptide bonds, thereby polymerizing the amino acids delivered by tRNAs into a polypeptide chain. The nascent polypeptides leave the ribosome through a tunnel in the LSU and interact with protein factors that function in enzymatic processing, targeting, and the membrane insertion of nascent chains at the exit of the ribosomal tunnel. This is Small ribosomal subunit protein eS8A from Saccharomyces cerevisiae (strain ATCC 204508 / S288c) (Baker's yeast).